We begin with the raw amino-acid sequence, 151 residues long: Austinoid biosynthesis clusters protein F (151 aa).

This sequence belongs to the trt14 isomerase family. In terms of assembly, homodimer.

It participates in secondary metabolite biosynthesis; terpenoid biosynthesis. Functionally, part of the gene cluster B that mediates the biosynthesis of the fungal meroterpenoid acetoxydehydroaustin. The first step of the pathway is the synthesis of 3,5-dimethylorsellinic acid by the polyketide synthase ausA. 3,5-dimethylorsellinic acid is then prenylated by the polyprenyl transferase ausN. Further epoxidation by the FAD-dependent monooxygenase ausM and cyclization by the probable terpene cyclase ausL lead to the formation of protoaustinoid A. Protoaustinoid A is then oxidized to spiro-lactone preaustinoid A3 by the combined action of the FAD-binding monooxygenases ausB and ausC, and the dioxygenase ausE. Acid-catalyzed keto-rearrangement and ring contraction of the tetraketide portion of preaustinoid A3 by ausJ lead to the formation of preaustinoid A4. The aldo-keto reductase ausK, with the help of ausH, is involved in the next step by transforming preaustinoid A4 into isoaustinone which is in turn hydroxylated by the P450 monooxygenase ausI to form austinolide. The cytochrome P450 monooxygenase ausG then modifies austinolide to austinol. Austinol is further acetylated to austin by the O-acetyltransferase ausP, which spontaneously changes to dehydroaustin. The cytochrome P450 monooxygenase then converts dehydroaustin is into 7-dehydrodehydroaustin. The hydroxylation catalyzed by ausR permits the second O-acetyltransferase ausQ to add an additional acetyl group to the molecule, leading to the formation of acetoxydehydroaustin. Due to genetic rearrangements of the clusters and the subsequent loss of some enzymes, the end product of the Penicillium brasilianum austinoid biosynthesis clusters is acetoxydehydroaustin. The chain is Austinoid biosynthesis clusters protein F from Penicillium brasilianum.